Consider the following 347-residue polypeptide: Selenide, water dikinase (347 aa).

Cys17 is an active-site residue. ATP is bound by residues Lys20 and 48 to 50 (TRD). Asp51 lines the Mg(2+) pocket. ATP is bound by residues Asp68, Asp91, and 139–141 (GHS). Asp91 contacts Mg(2+). Asp227 provides a ligand contact to Mg(2+).

It belongs to the selenophosphate synthase 1 family. Class I subfamily. In terms of assembly, homodimer. Mg(2+) is required as a cofactor.

The catalysed reaction is hydrogenselenide + ATP + H2O = selenophosphate + AMP + phosphate + 2 H(+). Its function is as follows. Synthesizes selenophosphate from selenide and ATP. In Enterobacter sp. (strain 638), this protein is Selenide, water dikinase.